The sequence spans 411 residues: Serine hydroxymethyltransferase (411 aa).

Position 120–122 (120–122) interacts with (6S)-5,6,7,8-tetrahydrofolate; it reads GHL. Residue K225 is modified to N6-(pyridoxal phosphate)lysine. Position 350–352 (350–352) interacts with (6S)-5,6,7,8-tetrahydrofolate; it reads SPF.

The protein belongs to the SHMT family. In terms of assembly, homodimer. It depends on pyridoxal 5'-phosphate as a cofactor.

The protein localises to the cytoplasm. The catalysed reaction is (6R)-5,10-methylene-5,6,7,8-tetrahydrofolate + glycine + H2O = (6S)-5,6,7,8-tetrahydrofolate + L-serine. The protein operates within one-carbon metabolism; tetrahydrofolate interconversion. It functions in the pathway amino-acid biosynthesis; glycine biosynthesis; glycine from L-serine: step 1/1. Catalyzes the reversible interconversion of serine and glycine with tetrahydrofolate (THF) serving as the one-carbon carrier. This reaction serves as the major source of one-carbon groups required for the biosynthesis of purines, thymidylate, methionine, and other important biomolecules. Also exhibits THF-independent aldolase activity toward beta-hydroxyamino acids, producing glycine and aldehydes, via a retro-aldol mechanism. The sequence is that of Serine hydroxymethyltransferase from Lactobacillus gasseri (strain ATCC 33323 / DSM 20243 / BCRC 14619 / CIP 102991 / JCM 1131 / KCTC 3163 / NCIMB 11718 / NCTC 13722 / AM63).